Consider the following 438-residue polypeptide: Putative hydrolase MSMEG_3995/MSMEI_3903 (438 aa).

Residues Asp95, Asp104, Glu143, and His208 each contribute to the Zn(2+) site. An Isoglutamyl lysine isopeptide (Lys-Gln) (interchain with Q-Cter in protein Pup) cross-link involves residue Lys217. His400 is a Zn(2+) binding site.

Belongs to the peptidase M20 family. The cofactor is Zn(2+).

The chain is Putative hydrolase MSMEG_3995/MSMEI_3903 from Mycolicibacterium smegmatis (strain ATCC 700084 / mc(2)155) (Mycobacterium smegmatis).